A 329-amino-acid chain; its full sequence is Protein PRY2 (329 aa).

The signal sequence occupies residues 1-18 (MKFSKVSLLAASASVALS). Residues 122–131 (TSASATQDDV) are compositionally biased toward polar residues. Residues 122 to 197 (TSASATQDDV…SSSDFSTSMV (76 aa)) form a disordered region. The segment covering 132–190 (TTTLTSSTQPTSTTTPTTTTTSPTTTTSPTTTASPTTTASPTTATTTQSTASSTQSSSS) has biased composition (low complexity). In terms of domain architecture, SCP spans 197-311 (VNEHNTKRAL…EWGDYIICSY (115 aa)).

This sequence belongs to the CRISP family. Post-translationally, O-glycosylated.

It is found in the secreted. In terms of biological role, secreted protein required for efficient export of lipids such as acetylated sterols. Acts in detoxification of hydrophobic compounds. This is Protein PRY2 (PRY2) from Saccharomyces cerevisiae (strain ATCC 204508 / S288c) (Baker's yeast).